The sequence spans 116 residues: Ribonuclease P protein component (116 aa).

This sequence belongs to the RnpA family. Consists of a catalytic RNA component (M1 or rnpB) and a protein subunit.

The enzyme catalyses Endonucleolytic cleavage of RNA, removing 5'-extranucleotides from tRNA precursor.. Functionally, RNaseP catalyzes the removal of the 5'-leader sequence from pre-tRNA to produce the mature 5'-terminus. It can also cleave other RNA substrates such as 4.5S RNA. The protein component plays an auxiliary but essential role in vivo by binding to the 5'-leader sequence and broadening the substrate specificity of the ribozyme. This Carboxydothermus hydrogenoformans (strain ATCC BAA-161 / DSM 6008 / Z-2901) protein is Ribonuclease P protein component.